Consider the following 295-residue polypeptide: UDP-N-acetylenolpyruvoylglucosamine reductase (295 aa).

The FAD-binding PCMH-type domain occupies 24–188 (KVGGDAEIFF…LKAVFKVNKG (165 aa)). Residue R168 is part of the active site. Catalysis depends on S217, which acts as the Proton donor. Residue E287 is part of the active site.

Belongs to the MurB family. It depends on FAD as a cofactor.

Its subcellular location is the cytoplasm. The catalysed reaction is UDP-N-acetyl-alpha-D-muramate + NADP(+) = UDP-N-acetyl-3-O-(1-carboxyvinyl)-alpha-D-glucosamine + NADPH + H(+). It functions in the pathway cell wall biogenesis; peptidoglycan biosynthesis. In terms of biological role, cell wall formation. In Rickettsia akari (strain Hartford), this protein is UDP-N-acetylenolpyruvoylglucosamine reductase.